A 150-amino-acid polypeptide reads, in one-letter code: UPF0506 protein SJCHGC03144 (150 aa).

Positions 1 to 18 are cleaved as a signal peptide; it reads MNTCIQLLILCLVTVINS. N-linked (GlcNAc...) asparagine glycosylation is found at Asn20, Asn36, Asn52, and Asn110. 3 cysteine pairs are disulfide-bonded: Cys116–Cys130, Cys123–Cys134, and Cys129–Cys139.

Belongs to the UPF0506 family.

The protein resides in the secreted. This chain is UPF0506 protein SJCHGC03144, found in Schistosoma japonicum (Blood fluke).